A 521-amino-acid polypeptide reads, in one-letter code: Amidase (521 aa).

Catalysis depends on charge relay system residues Lys96 and Ser171. The disordered stretch occupies residues 155–174 (SGPVRNPWDRQREAGGSSGG). The Acyl-ester intermediate role is filled by Ser195.

The protein belongs to the amidase family. As to quaternary structure, homodimer.

It catalyses the reaction a monocarboxylic acid amide + H2O = a monocarboxylate + NH4(+). Hydrolyzes propionamides efficiently, and also at a lower efficiency, acetamide, acrylamide and indoleacetamide. This enzyme seems to be stereospecific and can lead to the production of a single enantiomer. In Rhodococcus erythropolis (Arthrobacter picolinophilus), this protein is Amidase (amdA).